A 745-amino-acid chain; its full sequence is MMTQANAYFYNGADVALLNGQYTDVFSLLGMHTSEDGKSLIVRCFLRNALKVDVISIKDGRRVAGLEKVNDAGLFAGTMGRRVKPFLYLLRIQYPLSQIEIVDPYQFGPLLNADDLYLFGEGSAERAYEFLGANWRDVEGIEGVHFCVWAPNAKRVSVVGDFNHWDDTRHVMRQHMANGLWEIFLPNVAEGAHYKFDLVHPNGERHAKSDPMATQMECAPHNASIVPKKSKHSWKDTLWMNKRAVTAWHKAPMAIYEVHLGSWRRKGDNGEQYLDYQDLIEQLIPYVKAQSFTHIELMPISEYPFDGSWGYQPVGLYAPTHRFGDANGLKAFVDACHQADIGVVLDWVAAHFPKDPHGLVRFDGTCLYEHEDPRKGTHPDWDTLIYNYGRGEVRSFLLSNACYWLREFHFDGLRIDAVSSMLYLDYSREPGQWLPNAYGGRENLEAISFLQMLNQRLYQAFPGICMIAEESTAFAGVTKPTDHHGLGFGFKWNMGWMNDSLSYLSRDPIYRQYHHHQLTFSLMYAYTEQFMLSVSHDEVVHGKGSLLHKIPGDDWQKFATLRAYYGFMWGHPGKKLLFMGSEFAQRDEWDHNHSLDWHLLAFEPHQGVQRWLKDLNQLYQGMSALSVLDYQPAGFRWLDCDNGSASIFTFVRYGLAGDAPLVFVINMTPSVHHGFRIGLPQAGDFCEYLNSDSYLYGGSNQGNAGLVVAQNQSWQGMESSALITVPPLSCLVLGPVANQVEAKRR.

The active-site Nucleophile is D416. E469 (proton donor) is an active-site residue.

It belongs to the glycosyl hydrolase 13 family. GlgB subfamily. Monomer.

The catalysed reaction is Transfers a segment of a (1-&gt;4)-alpha-D-glucan chain to a primary hydroxy group in a similar glucan chain.. Its pathway is glycan biosynthesis; glycogen biosynthesis. Its function is as follows. Catalyzes the formation of the alpha-1,6-glucosidic linkages in glycogen by scission of a 1,4-alpha-linked oligosaccharide from growing alpha-1,4-glucan chains and the subsequent attachment of the oligosaccharide to the alpha-1,6 position. This Shewanella sp. (strain W3-18-1) protein is 1,4-alpha-glucan branching enzyme GlgB.